The chain runs to 513 residues: CUGBP Elav-like family member 1 (513 aa).

Thr-31 carries the phosphothreonine modification. 2 RRM domains span residues 43-126 and 135-215; these read IKMF…PADS and RKLF…FADT. A Glycyl lysine isopeptide (Lys-Gly) (interchain with G-Cter in SUMO2) cross-link involves residue Lys-136. Ser-206 and Ser-329 each carry phosphoserine. Residues 304–336 form a disordered region; it reads TPSGTNALTTSSSPLSVLTSSGSSPSSSSSNSV. Residues 311–336 show a composition bias toward low complexity; the sequence is LTTSSSPLSVLTSSGSSPSSSSSNSV. One can recognise an RRM 3 domain in the interval 428 to 506; the sequence is ANLFIYHLPQ…KRLKVQLKRS (79 aa).

Belongs to the CELF/BRUNOL family. As to quaternary structure, associates with polysomes. Interacts with HNRNPH1; the interaction in RNA-dependent. Interacts with PARN. Component of an EIF2 complex at least composed of CELF1/CUGBP1, CALR, CALR3, EIF2S1, EIF2S2, HSP90B1 and HSPA5.

The protein localises to the nucleus. It is found in the cytoplasm. RNA-binding protein implicated in the regulation of several post-transcriptional events. Involved in pre-mRNA alternative splicing, mRNA translation and stability. Mediates exon inclusion and/or exclusion in pre-mRNA that are subject to tissue-specific and developmentally regulated alternative splicing. Specifically activates exon 5 inclusion of cardiac isoforms of TNNT2 during heart remodeling at the juvenile to adult transition. Acts both as an activator and as a repressor of a pair of coregulated exons: promotes inclusion of the smooth muscle (SM) exon but exclusion of the non-muscle (NM) exon in actinin pre-mRNAs. Activates SM exon 5 inclusion by antagonizing the repressive effect of PTB. Promotes exclusion of exon 11 of the INSR pre-mRNA. Inhibits, together with HNRNPH1, insulin receptor (IR) pre-mRNA exon 11 inclusion in myoblast. Increases translation and controls the choice of translation initiation codon of CEBPB mRNA. Increases mRNA translation of CEBPB in aging liver. Increases translation of CDKN1A mRNA by antagonizing the repressive effect of CALR3. Mediates rapid cytoplasmic mRNA deadenylation. Recruits the deadenylase PARN to the poly(A) tail of EDEN-containing mRNAs to promote their deadenylation. Required for completion of spermatogenesis. Binds to (CUG)n triplet repeats in the 3'-UTR of transcripts such as DMPK and to Bruno response elements (BREs). Binds to muscle-specific splicing enhancer (MSE) intronic sites flanking the alternative exon 5 of TNNT2 pre-mRNA. Binds to AU-rich sequences (AREs or EDEN-like) localized in the 3'-UTR of JUN and FOS mRNAs. Binds to the IR RNA. Binds to the 5'-region of CDKN1A and CEBPB mRNAs. Binds with the 5'-region of CEBPB mRNA in aging liver. May be a specific regulator of miRNA biogenesis. Binds to primary microRNA pri-MIR140 and, with CELF2, negatively regulates the processing to mature miRNA. The sequence is that of CUGBP Elav-like family member 1 (CELF1) from Pongo abelii (Sumatran orangutan).